Here is a 266-residue protein sequence, read N- to C-terminus: Putative tyrosine phosphatase 197R (266 aa).

The Tyrosine-protein phosphatase domain occupies R15 to D167. C111 (phosphocysteine intermediate) is an active-site residue.

This sequence belongs to the protein-tyrosine phosphatase family.

It carries out the reaction O-phospho-L-tyrosyl-[protein] + H2O = L-tyrosyl-[protein] + phosphate. The chain is Putative tyrosine phosphatase 197R from Invertebrate iridescent virus 6 (IIV-6).